A 147-amino-acid chain; its full sequence is uncharacterized protein (147 aa).

Positions 11–147 (NTSPGFLLWQ…SGLQELLKHE (137 aa)) constitute an HTH marR-type domain. Positions 61 to 84 (QKKLASFSQTNIMMVSEVVRTLEK) form a DNA-binding region, H-T-H motif.

This is an uncharacterized protein from Bacillus subtilis (strain 168).